The sequence spans 381 residues: Creatine kinase M-type (381 aa).

The Phosphagen kinase N-terminal domain occupies 11–98 (KLKFSAEEEF…FDPVIQDRHG (88 aa)). A disordered region spans residues 99-118 (GYKPTDKHRTDLNHENLKGG). Positions 125-367 (YVLSSRVRTG…KLMVEMEKKL (243 aa)) constitute a Phosphagen kinase C-terminal domain. ATP-binding positions include 128 to 132 (SSRVR), histidine 191, arginine 236, arginine 292, 320 to 325 (RGTGGV), and aspartate 335.

The protein belongs to the ATP:guanido phosphotransferase family. In terms of assembly, dimer of identical or non-identical chains, which can be either B (brain type) or M (muscle type). With MM being the major form in skeletal muscle and myocardium, MB existing in myocardium, and BB existing in many tissues, especially brain. As to expression, predominantly found in skeletal muscle, but not in the heart.

The protein resides in the cytoplasm. The enzyme catalyses creatine + ATP = N-phosphocreatine + ADP + H(+). Functionally, reversibly catalyzes the transfer of phosphate between ATP and various phosphogens (e.g. creatine phosphate). Creatine kinase isoenzymes play a central role in energy transduction in tissues with large, fluctuating energy demands, such as skeletal muscle, heart, brain and spermatozoa. This chain is Creatine kinase M-type, found in Gallus gallus (Chicken).